The chain runs to 262 residues: 1-(5-phosphoribosyl)-5-[(5-phosphoribosylamino)methylideneamino] imidazole-4-carboxamide isomerase (262 aa).

The active-site Proton acceptor is D8. D130 acts as the Proton donor in catalysis.

The protein belongs to the HisA/HisF family.

The protein resides in the cytoplasm. It catalyses the reaction 1-(5-phospho-beta-D-ribosyl)-5-[(5-phospho-beta-D-ribosylamino)methylideneamino]imidazole-4-carboxamide = 5-[(5-phospho-1-deoxy-D-ribulos-1-ylimino)methylamino]-1-(5-phospho-beta-D-ribosyl)imidazole-4-carboxamide. It participates in amino-acid biosynthesis; L-histidine biosynthesis; L-histidine from 5-phospho-alpha-D-ribose 1-diphosphate: step 4/9. The protein is 1-(5-phosphoribosyl)-5-[(5-phosphoribosylamino)methylideneamino] imidazole-4-carboxamide isomerase of Chloroherpeton thalassium (strain ATCC 35110 / GB-78).